The following is a 388-amino-acid chain: Succinyl-diaminopimelate desuccinylase (388 aa).

Residue H84 participates in Zn(2+) binding. D86 is an active-site residue. D115 contributes to the Zn(2+) binding site. E146 acts as the Proton acceptor in catalysis. Residues E147, E175, and H360 each coordinate Zn(2+).

This sequence belongs to the peptidase M20A family. DapE subfamily. As to quaternary structure, homodimer. Requires Zn(2+) as cofactor. Co(2+) is required as a cofactor.

It carries out the reaction N-succinyl-(2S,6S)-2,6-diaminopimelate + H2O = (2S,6S)-2,6-diaminopimelate + succinate. Its pathway is amino-acid biosynthesis; L-lysine biosynthesis via DAP pathway; LL-2,6-diaminopimelate from (S)-tetrahydrodipicolinate (succinylase route): step 3/3. In terms of biological role, catalyzes the hydrolysis of N-succinyl-L,L-diaminopimelic acid (SDAP), forming succinate and LL-2,6-diaminopimelate (DAP), an intermediate involved in the bacterial biosynthesis of lysine and meso-diaminopimelic acid, an essential component of bacterial cell walls. This Helicobacter pylori (strain G27) protein is Succinyl-diaminopimelate desuccinylase.